The primary structure comprises 309 residues: Small ribosomal subunit biogenesis GTPase RsgA (309 aa).

The CP-type G domain occupies 88 to 247 (KNLITRPPVA…IADTPGFNKP (160 aa)). GTP is bound by residues 137–140 (TKRD) and 189–197 (GPSGVGKSS). Positions 272, 277, 279, and 285 each coordinate Zn(2+).

This sequence belongs to the TRAFAC class YlqF/YawG GTPase family. RsgA subfamily. In terms of assembly, monomer. Associates with 30S ribosomal subunit, binds 16S rRNA. Zn(2+) serves as cofactor.

Its subcellular location is the cytoplasm. Its function is as follows. One of several proteins that assist in the late maturation steps of the functional core of the 30S ribosomal subunit. Helps release RbfA from mature subunits. May play a role in the assembly of ribosomal proteins into the subunit. Circularly permuted GTPase that catalyzes slow GTP hydrolysis, GTPase activity is stimulated by the 30S ribosomal subunit. In Prochlorococcus marinus (strain SARG / CCMP1375 / SS120), this protein is Small ribosomal subunit biogenesis GTPase RsgA.